A 260-amino-acid polypeptide reads, in one-letter code: Small ribosomal subunit protein uS2 (260 aa).

The span at 228–240 shows a compositional bias: basic and acidic residues; that stretch reads RKETKAENAEEAM. Positions 228–260 are disordered; that stretch reads RKETKAENAEEAMKQAAEAEAEAAAPAAEESAE. A compositionally biased stretch (low complexity) spans 241–260; the sequence is KQAAEAEAEAAAPAAEESAE.

Belongs to the universal ribosomal protein uS2 family.

This is Small ribosomal subunit protein uS2 from Oleidesulfovibrio alaskensis (strain ATCC BAA-1058 / DSM 17464 / G20) (Desulfovibrio alaskensis).